The chain runs to 234 residues: NAD-reducing hydrogenase HoxS subunit gamma (234 aa).

In terms of domain architecture, 2Fe-2S ferredoxin-type spans 2–77 (SIQITIDGKT…GLNVEVNDPE (76 aa)). Positions 35, 46, 49, and 61 each coordinate [2Fe-2S] cluster. Residues 77–116 (ELVDMRKALVEFLFAEGNHNCPSCEKSGRCQLQAVGYEVD) form the 4Fe-4S His(Cys)3-ligated-type domain. [4Fe-4S] cluster contacts are provided by H95, C97, C100, C106, C145, C148, C151, and C198.

The protein belongs to the complex I 75 kDa subunit family. Tetramer of an alpha and a gamma subunits (flavin-containing dimer), and a delta and a nickel-containing beta subunits (hydrogenase dimer). [2Fe-2S] cluster serves as cofactor. [4Fe-4S] cluster is required as a cofactor.

The protein resides in the cytoplasm. It carries out the reaction H2 + NAD(+) = NADH + H(+). Subunits alpha and gamma of HoxS constitute an NADH--oxidoreductase. This Cupriavidus necator (strain ATCC 17699 / DSM 428 / KCTC 22496 / NCIMB 10442 / H16 / Stanier 337) (Ralstonia eutropha) protein is NAD-reducing hydrogenase HoxS subunit gamma (hoxU).